The following is a 213-amino-acid chain: U1 small nuclear ribonucleoprotein C (213 aa).

The segment at 4-36 adopts a Matrin-type zinc-finger fold; that stretch reads YYCDYCDTYLTHDSPSVRKQHNAGYKHKANVRS. Pro residues predominate over residues 143–166; that stretch reads APSMPMPPLNSLPRPPTMNVPPAV. Residues 143 to 213 form a disordered region; sequence APSMPMPPLN…INAQGPEANH (71 aa). The segment covering 167 to 180 has biased composition (low complexity); it reads PGSTSTPTSGGAPS.

The protein belongs to the U1 small nuclear ribonucleoprotein C family. In terms of assembly, U1 snRNP is composed of the 7 core Sm proteins B/B', D1, D2, D3, E, F and G that assemble in a heptameric protein ring on the Sm site of the small nuclear RNA to form the core snRNP, and at least 3 U1 snRNP-specific proteins U1-70K, U1-A and U1-C. U1-C interacts with U1 snRNA and the 5' splice-site region of the pre-mRNA.

Its subcellular location is the nucleus. Functionally, component of the spliceosomal U1 snRNP, which is essential for recognition of the pre-mRNA 5' splice-site and the subsequent assembly of the spliceosome. U1-C is directly involved in initial 5' splice-site recognition for both constitutive and regulated alternative splicing. The interaction with the 5' splice-site seems to precede base-pairing between the pre-mRNA and the U1 snRNA. Stimulates commitment or early (E) complex formation by stabilizing the base pairing of the 5' end of the U1 snRNA and the 5' splice-site region. This is U1 small nuclear ribonucleoprotein C from Vitis vinifera (Grape).